The following is a 192-amino-acid chain: UPF0312 protein PputGB1_5030 (192 aa).

The first 23 residues, Met-1 to Ala-23, serve as a signal peptide directing secretion.

Belongs to the UPF0312 family. Type 1 subfamily.

It is found in the periplasm. The sequence is that of UPF0312 protein PputGB1_5030 from Pseudomonas putida (strain GB-1).